A 278-amino-acid polypeptide reads, in one-letter code: MQKETWRFIDSGNASPAFNMALDEALLYWHSEKKIPPVIRFYGWNPATLSVGYFQNIKKEINFEAVHKYNLGFVRRPTGGRGVLHDQELTYSVIVSEEHPEMPATVTEAYRVISEGILQGFRNLGLDAYFAIPRTEKEKESLKNPRSSVCFDAPSWYELVVEGRKVAGSAQTRQKGVILQHGSILLDLDEDKLFDLFLYPSERVRERMQRNFKNKAVAINELIEKRVTMDEARKAFKEGFETGLNIHLEPYELSQEELDFVHHLAETKYASDEWNYKR.

The region spanning 33 to 248 (KKIPPVIRFY…GFETGLNIHL (216 aa)) is the BPL/LPL catalytic domain. The Acyl-thioester intermediate role is filled by Cys-150.

It belongs to the octanoyltransferase LipM family. As to quaternary structure, monomer.

It catalyses the reaction octanoyl-[ACP] + L-lysyl-[protein] = N(6)-octanoyl-L-lysyl-[protein] + holo-[ACP] + H(+). It functions in the pathway protein modification; protein lipoylation via endogenous pathway; protein N(6)-(lipoyl)lysine from octanoyl-[acyl-carrier-protein]. Its function is as follows. Catalyzes the transfer of endogenously produced octanoic acid from octanoyl-acyl-carrier-protein onto the lipoyl domain of GcvH, an intermediate carrier during protein lipoylation. Is also able to catalyze the reverse reaction. Octanoyl-CoA can also act as a substrate although very poorly. Does not display lipoate protein ligase activity, despite its sequence similarity to LplA. This Bacillus subtilis (strain 168) protein is Octanoyltransferase LipM (lipM).